Here is a 201-residue protein sequence, read N- to C-terminus: Small ribosomal subunit protein uS5 (201 aa).

The tract at residues 1–28 (MAGPQRRGSGAGGGERRDRKGRDGGASA) is disordered. A compositionally biased stretch (basic and acidic residues) spans 14 to 23 (GERRDRKGRD). The 64-residue stretch at 34 to 97 (YVERVVAINR…EEAKKNFFKV (64 aa)) folds into the S5 DRBM domain.

This sequence belongs to the universal ribosomal protein uS5 family. Part of the 30S ribosomal subunit. Contacts proteins S4 and S8.

Functionally, with S4 and S12 plays an important role in translational accuracy. Located at the back of the 30S subunit body where it stabilizes the conformation of the head with respect to the body. In Streptomyces griseus subsp. griseus (strain JCM 4626 / CBS 651.72 / NBRC 13350 / KCC S-0626 / ISP 5235), this protein is Small ribosomal subunit protein uS5.